Here is a 96-residue protein sequence, read N- to C-terminus: uncharacterized protein (96 aa).

It belongs to the NifU family.

This is an uncharacterized protein from Azotobacter vinelandii.